The chain runs to 150 residues: Ankyrin repeat protein C18/B24 (150 aa).

An ANK repeat occupies 41-73 (ENKTLLYYAVDVNNIQFAKRLLEYGASVTTSRS).

The polypeptide is Ankyrin repeat protein C18/B24 (Vaccinia virus (strain Copenhagen) (VACV)).